The primary structure comprises 477 residues: Putative BTB/POZ domain-containing protein R830 (477 aa).

Residues 13-83 (SDLELILVDK…FYGIETNNDP (71 aa)) form the BTB domain.

Belongs to the mimivirus BTB/WD family.

This chain is Putative BTB/POZ domain-containing protein R830, found in Acanthamoeba polyphaga mimivirus (APMV).